The sequence spans 361 residues: 3-dehydroquinate synthase (361 aa).

NAD(+)-binding positions include 72-77 (SGEKEK), 130-131 (TT), Lys-142, and Lys-151. Zn(2+)-binding residues include Glu-184, His-247, and His-264.

The protein belongs to the sugar phosphate cyclases superfamily. Dehydroquinate synthase family. It depends on Co(2+) as a cofactor. Requires Zn(2+) as cofactor. NAD(+) serves as cofactor.

It is found in the cytoplasm. The enzyme catalyses 7-phospho-2-dehydro-3-deoxy-D-arabino-heptonate = 3-dehydroquinate + phosphate. Its pathway is metabolic intermediate biosynthesis; chorismate biosynthesis; chorismate from D-erythrose 4-phosphate and phosphoenolpyruvate: step 2/7. Functionally, catalyzes the conversion of 3-deoxy-D-arabino-heptulosonate 7-phosphate (DAHP) to dehydroquinate (DHQ). The sequence is that of 3-dehydroquinate synthase from Bacillus cereus (strain B4264).